Here is a 92-residue protein sequence, read N- to C-terminus: Large ribosomal subunit protein bL27 (92 aa).

The propeptide occupies 1–10 (MLLQLQIQLF).

It belongs to the bacterial ribosomal protein bL27 family. In terms of processing, the N-terminus is cleaved by ribosomal processing cysteine protease Prp.

This Aster yellows witches'-broom phytoplasma (strain AYWB) protein is Large ribosomal subunit protein bL27.